A 267-amino-acid chain; its full sequence is MTNQTIKVVIAGARGRMGIEAVKLAEETSHFELVAALDHAHEGKKLSDVIHTTSEAPIYTDIDVCLSETAPDVLIDLTTPEIGKVHTKKALEHGVRPVVGTTGFSEADLKELQQLTEEKGIGCIIAPNFAVGAVLMMKFAKMAANYFPDVEIIELHHDKKLDAPSGTGLKTAEMIAEVRESKKQGHPDEKELIEGARGADYDGIRLHSVRLPGMIAHQEVLFGMDGQTLTIRHDSYNRASFMSGVKLSVEQVMHIDQLVYGLENIID.

Residues 12–17 (GARGRM), Asp-38, 100–102 (GTT), and 126–129 (APNF) contribute to the NAD(+) site. The active-site Proton donor/acceptor is His-156. His-157 is a (S)-2,3,4,5-tetrahydrodipicolinate binding site. Catalysis depends on Lys-160, which acts as the Proton donor. A (S)-2,3,4,5-tetrahydrodipicolinate-binding site is contributed by 166-167 (GT).

This sequence belongs to the DapB family.

It is found in the cytoplasm. It catalyses the reaction (S)-2,3,4,5-tetrahydrodipicolinate + NAD(+) + H2O = (2S,4S)-4-hydroxy-2,3,4,5-tetrahydrodipicolinate + NADH + H(+). The enzyme catalyses (S)-2,3,4,5-tetrahydrodipicolinate + NADP(+) + H2O = (2S,4S)-4-hydroxy-2,3,4,5-tetrahydrodipicolinate + NADPH + H(+). It functions in the pathway amino-acid biosynthesis; L-lysine biosynthesis via DAP pathway; (S)-tetrahydrodipicolinate from L-aspartate: step 4/4. Its function is as follows. Catalyzes the conversion of 4-hydroxy-tetrahydrodipicolinate (HTPA) to tetrahydrodipicolinate. The sequence is that of 4-hydroxy-tetrahydrodipicolinate reductase from Bacillus pumilus (strain SAFR-032).